The following is a 541-amino-acid chain: Glucose-6-phosphate isomerase (541 aa).

The Proton donor role is filled by glutamate 346. Active-site residues include histidine 377 and lysine 506.

The protein belongs to the GPI family.

It localises to the cytoplasm. It catalyses the reaction alpha-D-glucose 6-phosphate = beta-D-fructose 6-phosphate. Its pathway is carbohydrate biosynthesis; gluconeogenesis. It functions in the pathway carbohydrate degradation; glycolysis; D-glyceraldehyde 3-phosphate and glycerone phosphate from D-glucose: step 2/4. Its function is as follows. Catalyzes the reversible isomerization of glucose-6-phosphate to fructose-6-phosphate. In Sinorhizobium medicae (strain WSM419) (Ensifer medicae), this protein is Glucose-6-phosphate isomerase.